Consider the following 109-residue polypeptide: Mitochondrial pyruvate carrier 2 (109 aa).

A run of 3 helical transmembrane segments spans residues 19 to 35 (IHFW…IANI), 51 to 67 (IAVT…STII), and 74 to 90 (LFSV…YQLT).

This sequence belongs to the mitochondrial pyruvate carrier (MPC) (TC 2.A.105) family.

The protein localises to the mitochondrion inner membrane. Functionally, mediates the uptake of pyruvate into mitochondria. The chain is Mitochondrial pyruvate carrier 2 from Arabidopsis thaliana (Mouse-ear cress).